Here is a 243-residue protein sequence, read N- to C-terminus: Uridylate kinase (243 aa).

18-21 (KLGG) provides a ligand contact to ATP. Residue G59 coordinates UMP. Residues G60 and R64 each coordinate ATP. Residues D79 and 140–147 (MGMPYFST) each bind UMP. Y173 and D176 together coordinate ATP.

The protein belongs to the UMP kinase family. Homohexamer.

It localises to the cytoplasm. The catalysed reaction is UMP + ATP = UDP + ADP. It participates in pyrimidine metabolism; CTP biosynthesis via de novo pathway; UDP from UMP (UMPK route): step 1/1. Its activity is regulated as follows. Inhibited by UTP. Functionally, catalyzes the reversible phosphorylation of UMP to UDP. The polypeptide is Uridylate kinase (Corynebacterium efficiens (strain DSM 44549 / YS-314 / AJ 12310 / JCM 11189 / NBRC 100395)).